The sequence spans 445 residues: UDP-N-acetylmuramoylalanine--D-glutamate ligase (445 aa).

G117–T123 lines the ATP pocket.

This sequence belongs to the MurCDEF family.

It is found in the cytoplasm. It carries out the reaction UDP-N-acetyl-alpha-D-muramoyl-L-alanine + D-glutamate + ATP = UDP-N-acetyl-alpha-D-muramoyl-L-alanyl-D-glutamate + ADP + phosphate + H(+). It functions in the pathway cell wall biogenesis; peptidoglycan biosynthesis. Its function is as follows. Cell wall formation. Catalyzes the addition of glutamate to the nucleotide precursor UDP-N-acetylmuramoyl-L-alanine (UMA). This is UDP-N-acetylmuramoylalanine--D-glutamate ligase from Neisseria meningitidis serogroup B (strain ATCC BAA-335 / MC58).